A 201-amino-acid polypeptide reads, in one-letter code: Adenylyl-sulfate kinase (201 aa).

Residue 35–42 participates in ATP binding; that stretch reads GLSGSGKS. The Phosphoserine intermediate role is filled by Ser-109.

The protein belongs to the APS kinase family.

The catalysed reaction is adenosine 5'-phosphosulfate + ATP = 3'-phosphoadenylyl sulfate + ADP + H(+). It participates in sulfur metabolism; hydrogen sulfide biosynthesis; sulfite from sulfate: step 2/3. Its function is as follows. Catalyzes the synthesis of activated sulfate. This is Adenylyl-sulfate kinase from Enterobacter sp. (strain 638).